The primary structure comprises 359 residues: UPF0283 membrane protein RL2646 (359 aa).

Residues 1-48 form a disordered region; the sequence is MSKPPSDPPRRAPAAFIYEDEATERRDNGRQGGERRKPESFSEHIVVT. Residues 23 to 42 are compositionally biased toward basic and acidic residues; that stretch reads TERRDNGRQGGERRKPESFS. The next 2 helical transmembrane spans lie at 77-97 and 111-131; these read FGKI…GLWT and LGYA…ALVI.

The protein belongs to the UPF0283 family.

Its subcellular location is the cell inner membrane. This chain is UPF0283 membrane protein RL2646, found in Rhizobium johnstonii (strain DSM 114642 / LMG 32736 / 3841) (Rhizobium leguminosarum bv. viciae).